A 173-amino-acid polypeptide reads, in one-letter code: Bifunctional protein PyrR (173 aa).

Residues 93 to 105 (VILIDDVLYTGRT) carry the PRPP-binding motif.

It belongs to the purine/pyrimidine phosphoribosyltransferase family. PyrR subfamily. Homodimer and homohexamer; in equilibrium.

It catalyses the reaction UMP + diphosphate = 5-phospho-alpha-D-ribose 1-diphosphate + uracil. In terms of biological role, regulates transcriptional attenuation of the pyrimidine nucleotide (pyr) operon by binding in a uridine-dependent manner to specific sites on pyr mRNA. This disrupts an antiterminator hairpin in the RNA and favors formation of a downstream transcription terminator, leading to a reduced expression of downstream genes. Its function is as follows. Also displays a weak uracil phosphoribosyltransferase activity which is not physiologically significant. The chain is Bifunctional protein PyrR from Streptococcus pyogenes serotype M12 (strain MGAS2096).